The following is a 326-amino-acid chain: MSSSRPLNGLSRLDAEDRSPYQRLSQRMLDISGDRGVLKDVIREGAGELVTPDASVLVKYSGYLEHMDKPFDSNCFRKTPRLMKLGEDITLWGMELGLLSMRRGELARFLFKPTYAYGTLGCPPLIPPNTTVLFEIELLDFLDSAESDKFCALSAEQQSQFPLQKVLKVAATEREFGNYLFRQNRFYDAKVRYKRALLLLHRRTAPPEEQHLVETAKLLVFLNLSFTYLKLERPTMALRYGEQALIIDRKNAKALFRCGQACLLMTEYQKARDFLVRAQREQPFNHDINNELKKLASYYRDYMDKEREMCHRMFASGDNGSTVGEN.

Positions 53–142 (DASVLVKYSG…LFEIELLDFL (90 aa)) constitute a PPIase FKBP-type domain. TPR repeat units follow at residues 170–203 (AATE…LHRR), 218–251 (LLVF…DRKN), and 252–285 (AKAL…QPFN).

The protein belongs to the FKBP6 family. Interacts with HSP72/HSPA2 and CLTC. Interacts with GAPDH; leading to inhibit GAPDH catalytic activity. Interacts (via TPR repeats) with HSP90.

Its subcellular location is the cytoplasm. It localises to the cytosol. The protein localises to the nucleus. Co-chaperone required during spermatogenesis to repress transposable elements and prevent their mobilization, which is essential for the germline integrity. Acts via the piRNA metabolic process, which mediates the repression of transposable elements during meiosis by forming complexes composed of piRNAs and Piwi proteins and govern the methylation and subsequent repression of transposons. Acts as a co-chaperone via its interaction with HSP90 and is required for the piRNA amplification process, the secondary piRNA biogenesis. May be required together with HSP90 in removal of 16 nucleotide ping-pong by-products from Piwi complexes, possibly facilitating turnover of Piwi complexes. The protein is Inactive peptidyl-prolyl cis-trans isomerase FKBP6 (FKBP6) of Bos taurus (Bovine).